The primary structure comprises 442 residues: tRNA-2-methylthio-N(6)-dimethylallyladenosine synthase (442 aa).

One can recognise an MTTase N-terminal domain in the interval 2–120 (KKVFIRTFGC…LPKMIVDKET (119 aa)). Residues C11, C49, C83, C157, C161, and C164 each coordinate [4Fe-4S] cluster. The Radical SAM core domain occupies 143–375 (RVEGGAAFVS…NEVIEAETAR (233 aa)). One can recognise a TRAM domain in the interval 378–441 (QTMIGTVQRC…TFSLRGKIVE (64 aa)).

This sequence belongs to the methylthiotransferase family. MiaB subfamily. In terms of assembly, monomer. Requires [4Fe-4S] cluster as cofactor.

It is found in the cytoplasm. It carries out the reaction N(6)-dimethylallyladenosine(37) in tRNA + (sulfur carrier)-SH + AH2 + 2 S-adenosyl-L-methionine = 2-methylsulfanyl-N(6)-dimethylallyladenosine(37) in tRNA + (sulfur carrier)-H + 5'-deoxyadenosine + L-methionine + A + S-adenosyl-L-homocysteine + 2 H(+). Its function is as follows. Catalyzes the methylthiolation of N6-(dimethylallyl)adenosine (i(6)A), leading to the formation of 2-methylthio-N6-(dimethylallyl)adenosine (ms(2)i(6)A) at position 37 in tRNAs that read codons beginning with uridine. The polypeptide is tRNA-2-methylthio-N(6)-dimethylallyladenosine synthase (Neisseria gonorrhoeae (strain NCCP11945)).